A 554-amino-acid chain; its full sequence is Glutamine--tRNA ligase (554 aa).

Positions 33 to 43 (PEPNGYLHIGH) match the 'HIGH' region motif. ATP is bound by residues 34 to 36 (EPN) and 40 to 46 (HIGHAKS). The L-glutamine site is built by D66 and Y210. ATP is bound by residues T229, 259–260 (RL), and 267–269 (MSK). The short motif at 266 to 270 (VMSKR) is the 'KMSKS' region element.

This sequence belongs to the class-I aminoacyl-tRNA synthetase family. As to quaternary structure, monomer.

The protein localises to the cytoplasm. It carries out the reaction tRNA(Gln) + L-glutamine + ATP = L-glutaminyl-tRNA(Gln) + AMP + diphosphate. The chain is Glutamine--tRNA ligase from Clostridioides difficile (strain 630) (Peptoclostridium difficile).